Reading from the N-terminus, the 213-residue chain is A-type ATP synthase subunit D (213 aa).

This sequence belongs to the V-ATPase D subunit family. As to quaternary structure, has multiple subunits with at least A(3), B(3), C, D, E, F, H, I and proteolipid K(x).

Its subcellular location is the cell membrane. Functionally, component of the A-type ATP synthase that produces ATP from ADP in the presence of a proton gradient across the membrane. This chain is A-type ATP synthase subunit D, found in Saccharolobus islandicus (strain L.S.2.15 / Lassen #1) (Sulfolobus islandicus).